Here is a 72-residue protein sequence, read N- to C-terminus: Protein kish (72 aa).

The N-terminal stretch at 1–26 (MVAIFNFQSLLVVILLFICTCTYIRG) is a signal peptide. Residues 27–47 (SYPSLLEVRDKHSFSGLPRKA) are Extracellular-facing. Residues 48–68 (AIIGERLSPWVSACCLIMGLW) traverse the membrane as a helical segment. Topologically, residues 69–72 (TLYN) are cytoplasmic.

The protein belongs to the KISH family.

The protein localises to the golgi apparatus membrane. In terms of biological role, involved in the early part of the secretory pathway. The polypeptide is Protein kish (tmem167) (Dictyostelium discoideum (Social amoeba)).